The primary structure comprises 236 residues: 2-C-methyl-D-erythritol 4-phosphate cytidylyltransferase (236 aa).

Belongs to the IspD/TarI cytidylyltransferase family. IspD subfamily. In terms of assembly, homodimer.

It carries out the reaction 2-C-methyl-D-erythritol 4-phosphate + CTP + H(+) = 4-CDP-2-C-methyl-D-erythritol + diphosphate. It participates in isoprenoid biosynthesis; isopentenyl diphosphate biosynthesis via DXP pathway; isopentenyl diphosphate from 1-deoxy-D-xylulose 5-phosphate: step 2/6. In terms of biological role, catalyzes the formation of 4-diphosphocytidyl-2-C-methyl-D-erythritol from CTP and 2-C-methyl-D-erythritol 4-phosphate (MEP). The chain is 2-C-methyl-D-erythritol 4-phosphate cytidylyltransferase from Klebsiella pneumoniae subsp. pneumoniae (strain ATCC 700721 / MGH 78578).